Reading from the N-terminus, the 313-residue chain is Sideroflexin-4 (313 aa).

5 helical membrane-spanning segments follow: residues 87 to 107 (AALL…VKSL), 141 to 161 (LLLG…PRLL), 175 to 191 (FIPV…NVIA), 230 to 247 (VVLF…AYFF), and 269 to 289 (VLVM…IGRI).

The protein belongs to the sideroflexin family.

The protein resides in the mitochondrion inner membrane. In terms of biological role, mitochondrial amino-acid transporter. Does not act as a serine transporter: not able to mediate transport of serine into mitochondria. The polypeptide is Sideroflexin-4 (Bos taurus (Bovine)).